The chain runs to 490 residues: UDP-N-acetylmuramate--L-alanine ligase (490 aa).

G133–S139 provides a ligand contact to ATP.

Belongs to the MurCDEF family.

It is found in the cytoplasm. It catalyses the reaction UDP-N-acetyl-alpha-D-muramate + L-alanine + ATP = UDP-N-acetyl-alpha-D-muramoyl-L-alanine + ADP + phosphate + H(+). It functions in the pathway cell wall biogenesis; peptidoglycan biosynthesis. In terms of biological role, cell wall formation. In Saccharopolyspora erythraea (strain ATCC 11635 / DSM 40517 / JCM 4748 / NBRC 13426 / NCIMB 8594 / NRRL 2338), this protein is UDP-N-acetylmuramate--L-alanine ligase.